We begin with the raw amino-acid sequence, 970 residues long: Isoleucine--tRNA ligase (970 aa).

A 'HIGH' region motif is present at residues 65 to 75 (PYANGHLHIGH). Glu-608 is a binding site for L-isoleucyl-5'-AMP. Residues 649-653 (KMSKS) carry the 'KMSKS' region motif. Lys-652 is an ATP binding site. Zn(2+) contacts are provided by Cys-943, Cys-946, Cys-962, and Cys-965.

It belongs to the class-I aminoacyl-tRNA synthetase family. IleS type 1 subfamily. In terms of assembly, monomer. Zn(2+) is required as a cofactor.

The protein resides in the cytoplasm. The enzyme catalyses tRNA(Ile) + L-isoleucine + ATP = L-isoleucyl-tRNA(Ile) + AMP + diphosphate. Its function is as follows. Catalyzes the attachment of isoleucine to tRNA(Ile). As IleRS can inadvertently accommodate and process structurally similar amino acids such as valine, to avoid such errors it has two additional distinct tRNA(Ile)-dependent editing activities. One activity is designated as 'pretransfer' editing and involves the hydrolysis of activated Val-AMP. The other activity is designated 'posttransfer' editing and involves deacylation of mischarged Val-tRNA(Ile). This Ruegeria pomeroyi (strain ATCC 700808 / DSM 15171 / DSS-3) (Silicibacter pomeroyi) protein is Isoleucine--tRNA ligase.